The chain runs to 46 residues: Diuretic hormone class 1 (46 aa).

Ile-46 is subject to Isoleucine amide.

The protein resides in the secreted. Functionally, regulation of fluid secretion. Stimulates primary urine secretion by Malpighian tubules and causes a dose-dependent stimulation of cAMP levels in the tubules. Has a greater effect on the transport of Na(+) then K(+) ions. In vitro, has synergistic effects with the smaller diuretic hormone DH(31) which co-occurs with it. The chain is Diuretic hormone class 1 from Diploptera punctata (Pacific beetle cockroach).